A 602-amino-acid chain; its full sequence is Threonine--tRNA ligase (602 aa).

Residues 208-499 form a catalytic region; it reads DHRKLGTELK…LTEHCAGEFP (292 aa). Zn(2+) is bound by residues Cys-300, His-351, and His-476.

Belongs to the class-II aminoacyl-tRNA synthetase family. As to quaternary structure, homodimer. Requires Zn(2+) as cofactor.

The protein localises to the cytoplasm. The catalysed reaction is tRNA(Thr) + L-threonine + ATP = L-threonyl-tRNA(Thr) + AMP + diphosphate + H(+). In terms of biological role, catalyzes the attachment of threonine to tRNA(Thr) in a two-step reaction: L-threonine is first activated by ATP to form Thr-AMP and then transferred to the acceptor end of tRNA(Thr). Also edits incorrectly charged L-seryl-tRNA(Thr). In Campylobacter jejuni subsp. jejuni serotype O:6 (strain 81116 / NCTC 11828), this protein is Threonine--tRNA ligase.